Here is a 512-residue protein sequence, read N- to C-terminus: cAMP-dependent protein kinase catalytic subunit (512 aa).

The span at 1-15 shows a compositional bias: polar residues; sequence MDTTAVASKGSTNVG. Disordered regions lie at residues 1-79 and 118-166; these read MDTT…SSLW and IDNL…GLRD. Positions 16-27 are enriched in low complexity; that stretch reads SSTDTLSTSASL. Composition is skewed to polar residues over residues 32–52 and 62–79; these read NAGS…SFNG and SDAS…SSLW. Over residues 143 to 166 the composition is skewed to basic and acidic residues; sequence SRDGRGELGSEHGERRSAMDGLRD. The 256-residue stretch at 201-456 folds into the Protein kinase domain; it reads FNFLQTLGTG…SMDIIMHPWF (256 aa). Residues 207–215 and Lys230 contribute to the ATP site; that span reads LGTGSFGRV. Asp324 (proton acceptor) is an active-site residue. Residue Thr356 is modified to Phosphothreonine. One can recognise an AGC-kinase C-terminal domain in the interval 457–512; it reads RDISWDKILTRKIEVPYVPPIQAGMGDSSQFDAYADVATDYGTSEDPEFTSIFKDF.

Belongs to the protein kinase superfamily. AGC Ser/Thr protein kinase family. cAMP subfamily.

It catalyses the reaction L-seryl-[protein] + ATP = O-phospho-L-seryl-[protein] + ADP + H(+). The catalysed reaction is L-threonyl-[protein] + ATP = O-phospho-L-threonyl-[protein] + ADP + H(+). Activated by cAMP. The polypeptide is cAMP-dependent protein kinase catalytic subunit (pka1) (Schizosaccharomyces pombe (strain 972 / ATCC 24843) (Fission yeast)).